The sequence spans 239 residues: Exosome complex component Rrp41 (239 aa).

The tract at residues 1–21 is disordered; that stretch reads MEERPERLISEDGLRLDGRKP.

The protein belongs to the RNase PH family. Rrp41 subfamily. As to quaternary structure, component of the archaeal exosome complex. Forms a hexameric ring-like arrangement composed of 3 Rrp41-Rrp42 heterodimers. The hexameric ring associates with a trimer of Rrp4 and/or Csl4 subunits.

It localises to the cytoplasm. Catalytic component of the exosome, which is a complex involved in RNA degradation. Has 3'-&gt;5' exoribonuclease activity. Can also synthesize heteromeric RNA-tails. In Methanopyrus kandleri (strain AV19 / DSM 6324 / JCM 9639 / NBRC 100938), this protein is Exosome complex component Rrp41.